We begin with the raw amino-acid sequence, 187 residues long: Dihydrofolate reductase (187 aa).

The region spanning 4-185 (PLNCIVAVSQ…IKYKFEVYEK (182 aa)) is the DHFR domain. NADP(+) contacts are provided by residues Ala10 and 16-22 (GIGKNGD). 31-36 (EFKYFQ) serves as a coordination point for substrate. Lys33 carries the N6-acetyllysine; alternate modification. Residue Lys33 is modified to N6-succinyllysine; alternate. Position 55–57 (55–57 (RKT)) interacts with NADP(+). Residues Asn65 and Arg71 each contribute to the substrate site. Residues 77-79 (SRE) and 117-124 (GGSSVYQE) contribute to the NADP(+) site.

It belongs to the dihydrofolate reductase family. As to quaternary structure, homodimer.

The protein localises to the mitochondrion. It is found in the cytoplasm. It carries out the reaction (6S)-5,6,7,8-tetrahydrofolate + NADP(+) = 7,8-dihydrofolate + NADPH + H(+). Its pathway is cofactor biosynthesis; tetrahydrofolate biosynthesis; 5,6,7,8-tetrahydrofolate from 7,8-dihydrofolate: step 1/1. Functionally, key enzyme in folate metabolism. Contributes to the de novo mitochondrial thymidylate biosynthesis pathway. Catalyzes an essential reaction for de novo glycine and purine synthesis, and for DNA precursor synthesis. Binds its own mRNA. This Mus musculus (Mouse) protein is Dihydrofolate reductase (Dhfr).